Reading from the N-terminus, the 398-residue chain is 1-deoxy-D-xylulose 5-phosphate reductoisomerase (398 aa).

Residues threonine 21, glycine 22, serine 23, isoleucine 24, glycine 47, asparagine 50, and asparagine 127 each coordinate NADPH. Lysine 128 contributes to the 1-deoxy-D-xylulose 5-phosphate binding site. Glutamate 129 serves as a coordination point for NADPH. Residue aspartate 151 participates in Mn(2+) binding. Residues serine 152, glutamate 153, serine 177, and histidine 200 each contribute to the 1-deoxy-D-xylulose 5-phosphate site. Glutamate 153 serves as a coordination point for Mn(2+). Glycine 206 contributes to the NADPH binding site. The 1-deoxy-D-xylulose 5-phosphate site is built by serine 213, asparagine 218, lysine 219, and glutamate 222. Glutamate 222 is a Mn(2+) binding site.

The protein belongs to the DXR family. It depends on Mg(2+) as a cofactor. The cofactor is Mn(2+).

It catalyses the reaction 2-C-methyl-D-erythritol 4-phosphate + NADP(+) = 1-deoxy-D-xylulose 5-phosphate + NADPH + H(+). The protein operates within isoprenoid biosynthesis; isopentenyl diphosphate biosynthesis via DXP pathway; isopentenyl diphosphate from 1-deoxy-D-xylulose 5-phosphate: step 1/6. Catalyzes the NADPH-dependent rearrangement and reduction of 1-deoxy-D-xylulose-5-phosphate (DXP) to 2-C-methyl-D-erythritol 4-phosphate (MEP). The sequence is that of 1-deoxy-D-xylulose 5-phosphate reductoisomerase from Mycolicibacterium smegmatis (strain ATCC 700084 / mc(2)155) (Mycobacterium smegmatis).